A 968-amino-acid polypeptide reads, in one-letter code: RNA polymerase-associated protein RapA (968 aa).

A Helicase ATP-binding domain is found at 164-334; that stretch reads DVGRRHAPRV…FARLRLLDPN (171 aa). 177 to 184 lines the ATP pocket; it reads DEVGLGKT. A DEAH box motif is present at residues 280–283; the sequence is DEAH. Residues 490–644 form the Helicase C-terminal domain; the sequence is RVEWLMGYLT…TCPTGRTIYD (155 aa).

It belongs to the SNF2/RAD54 helicase family. RapA subfamily. Interacts with the RNAP. Has a higher affinity for the core RNAP than for the holoenzyme. Its ATPase activity is stimulated by binding to RNAP.

Transcription regulator that activates transcription by stimulating RNA polymerase (RNAP) recycling in case of stress conditions such as supercoiled DNA or high salt concentrations. Probably acts by releasing the RNAP, when it is trapped or immobilized on tightly supercoiled DNA. Does not activate transcription on linear DNA. Probably not involved in DNA repair. The chain is RNA polymerase-associated protein RapA from Enterobacter sp. (strain 638).